A 500-amino-acid polypeptide reads, in one-letter code: Pentatricopeptide repeat-containing protein At1g06580 (500 aa).

12 PPR repeats span residues 78–112, 113–147, 148–182, 183–217, 218–252, 253–287, 288–322, 323–357, 358–392, 393–427, 428–462, and 463–498; these read SIVD…GISH, DLYS…GFEP, SIVT…GYEP, NVVI…GIRP, DVVT…GISP, DVIT…SVNP, NIVT…GFFP, NAVT…GVDG, DTFT…GVHP, DMYT…KTVV, GIIT…GVSP, and DVIT…GLMP.

It belongs to the PPR family. P subfamily.

This Arabidopsis thaliana (Mouse-ear cress) protein is Pentatricopeptide repeat-containing protein At1g06580.